The chain runs to 180 residues: ADP-ribosylation factor 5 (180 aa).

G2 is lipidated: N-myristoyl glycine. GTP-binding positions include 24–31 (GLDAAGKT), 67–71 (DVGGQ), and 126–129 (NKQD).

Belongs to the small GTPase superfamily. Arf family.

The protein localises to the golgi apparatus. Its function is as follows. GTP-binding protein involved in protein trafficking; may modulate vesicle budding and uncoating within the Golgi apparatus. This Gallus gallus (Chicken) protein is ADP-ribosylation factor 5 (ARF5).